An 83-amino-acid chain; its full sequence is Cell division topological specificity factor (83 aa).

It belongs to the MinE family.

In terms of biological role, prevents the cell division inhibition by proteins MinC and MinD at internal division sites while permitting inhibition at polar sites. This ensures cell division at the proper site by restricting the formation of a division septum at the midpoint of the long axis of the cell. This Bordetella parapertussis (strain 12822 / ATCC BAA-587 / NCTC 13253) protein is Cell division topological specificity factor.